The primary structure comprises 269 residues: Tryptophan synthase alpha chain (269 aa).

Residues Glu41 and Asp52 each act as proton acceptor in the active site.

This sequence belongs to the TrpA family. As to quaternary structure, tetramer of two alpha and two beta chains.

The catalysed reaction is (1S,2R)-1-C-(indol-3-yl)glycerol 3-phosphate + L-serine = D-glyceraldehyde 3-phosphate + L-tryptophan + H2O. The protein operates within amino-acid biosynthesis; L-tryptophan biosynthesis; L-tryptophan from chorismate: step 5/5. In terms of biological role, the alpha subunit is responsible for the aldol cleavage of indoleglycerol phosphate to indole and glyceraldehyde 3-phosphate. The sequence is that of Tryptophan synthase alpha chain from Geobacillus stearothermophilus (Bacillus stearothermophilus).